Here is a 235-residue protein sequence, read N- to C-terminus: Segregation and condensation protein A (235 aa).

The protein belongs to the ScpA family. Component of a cohesin-like complex composed of ScpA, ScpB and the Smc homodimer, in which ScpA and ScpB bind to the head domain of Smc. The presence of the three proteins is required for the association of the complex with DNA.

Its subcellular location is the cytoplasm. Its function is as follows. Participates in chromosomal partition during cell division. May act via the formation of a condensin-like complex containing Smc and ScpB that pull DNA away from mid-cell into both cell halves. The chain is Segregation and condensation protein A from Streptococcus uberis (strain ATCC BAA-854 / 0140J).